Consider the following 332-residue polypeptide: Homoserine kinase (332 aa).

This sequence belongs to the pseudomonas-type ThrB family.

It catalyses the reaction L-homoserine + ATP = O-phospho-L-homoserine + ADP + H(+). It participates in amino-acid biosynthesis; L-threonine biosynthesis; L-threonine from L-aspartate: step 4/5. This is Homoserine kinase from Burkholderia multivorans (strain ATCC 17616 / 249).